Reading from the N-terminus, the 349-residue chain is Short chain dehydrogenase/reductase dpfgH (349 aa).

Residues 9–31 (LCIRVVDSLYGSFLYLPLAILFL) form a helical membrane-spanning segment. Ile-65, Arg-89, and Asp-115 together coordinate NADP(+). Residue Asn-118 is glycosylated (N-linked (GlcNAc...) asparagine). Positions 142 and 164 each coordinate NADP(+). Catalysis depends on proton donor residues Ser-191 and Ser-192. Positions 223 and 227 each coordinate NADP(+). Tyr-223 acts as the Proton acceptor in catalysis. Lys-227 functions as the Lowers pKa of active site Tyr in the catalytic mechanism. N-linked (GlcNAc...) asparagine glycosylation is present at Asn-334.

It belongs to the short-chain dehydrogenases/reductases (SDR) family.

The protein localises to the membrane. Its pathway is secondary metabolite biosynthesis; terpenoid biosynthesis. Functionally, short chain dehydrogenase/reductase; part of the gene cluster that mediates the biosynthesis of diterpenoid pyrones. The first step of the pathway is the synthesis of the alpha-pyrone moiety by the polyketide synthase dpfgA via condensation of one acetyl-CoA starter unit with 3 malonyl-CoA units and 2 methylations. The alpha-pyrone is then combined with geranylgeranyl pyrophosphate (GGPP) formed by the GGPP synthase dpfgD through the action of the prenyltransferase dpfgC to yield a linear alpha-pyrone diterpenoid. Subsequent steps in the diterpenoid pyrone biosynthetic pathway involve the decalin core formation, which is initiated by the epoxidation of the C10-C11 olefin by the FAD-dependent oxidoreductase dpfgE, and is followed by a cyclization cascade catalyzed by the terpene cyclase dpfgB. The short chain dehydrogenase/reductase dpfgG then oxidizes the 8S hydroxy group to a ketone and the short chain dehydrogenase/reductase dpfgH reduces the ketone to the 8R hydroxy group to yield higginsianin B. Higginsianin B is further methylated by the methyltransferase dpfgI to produce the intermediate named FDDP B. The cytochrome P450 monooxygenase dfgpJ then catalyzes a three-step oxidation at C-27 to generate a carboxylic acid as well as C-26 hydroxylation. Finally, methyltransferase dpfgK methylates the carboxylic acid generated by dpfgJ, yielding the final diterpenoid pyrones from the pathway which were named FDDP D and FDDP E. In Gibberella zeae (strain ATCC MYA-4620 / CBS 123657 / FGSC 9075 / NRRL 31084 / PH-1) (Wheat head blight fungus), this protein is Short chain dehydrogenase/reductase dpfgH.